The sequence spans 250 residues: Probable cytokinin riboside 5'-monophosphate phosphoribohydrolase LOGL6 (250 aa).

Substrate contacts are provided by residues Glu-98, Arg-116–Lys-117, and Gly-133–Glu-139.

Belongs to the LOG family. Expressed in roots, leaves, stems, tiller buds, shoot apex, immature inflorescences and flowers.

It catalyses the reaction N(6)-(dimethylallyl)adenosine 5'-phosphate + H2O = N(6)-dimethylallyladenine + D-ribose 5-phosphate. It carries out the reaction 9-ribosyl-trans-zeatin 5'-phosphate + H2O = trans-zeatin + D-ribose 5-phosphate. Its function is as follows. Cytokinin-activating enzyme working in the direct activation pathway. Phosphoribohydrolase that converts inactive cytokinin nucleotides to the biologically active free-base forms. This Oryza sativa subsp. japonica (Rice) protein is Probable cytokinin riboside 5'-monophosphate phosphoribohydrolase LOGL6 (LOGL6).